A 147-amino-acid chain; its full sequence is Large ribosomal subunit protein uL15 (147 aa).

Positions 1–15 (MTDRVKKTRKLRGHV) are enriched in basic residues. The disordered stretch occupies residues 1–34 (MTDRVKKTRKLRGHVSHGYGRVGKHRKHSGGRGL).

Belongs to the universal ribosomal protein uL15 family.

The sequence is that of Large ribosomal subunit protein uL15 (RPL27A) from Encephalitozoon cuniculi (strain GB-M1) (Microsporidian parasite).